A 1009-amino-acid chain; its full sequence is Helicase-like transcription factor (1009 aa).

Omega-N-methylarginine is present on Arg27. The DNA-binding element occupies 38–287 (EFQDVIPPDD…FSEKDRPENV (250 aa)). Lys112 participates in a covalent cross-link: Glycyl lysine isopeptide (Lys-Gly) (interchain with G-Cter in SUMO2). At Tyr195 the chain carries Phosphotyrosine; by JAK2. Lys211 is covalently cross-linked (Glycyl lysine isopeptide (Lys-Gly) (interchain with G-Cter in SUMO2)). 294–301 (DDMGLGKT) contributes to the ATP binding site. The tract at residues 336-365 (DDSMKLGGNNTSEKADGLSKDASRCSEQPS) is disordered. Residues 348 to 359 (EKADGLSKDASR) show a composition bias toward basic and acidic residues. Ser397, Ser398, and Ser400 each carry phosphoserine. The Helicase ATP-binding domain occupies 435–606 (IEDVAFACAL…WSLLSFLKLK (172 aa)). The DEGH box motif lies at 557–560 (DEGH). Thr736 carries the post-translational modification Phosphothreonine. An RING-type zinc finger spans residues 760–801 (CAICLDSLTVPVITHCAHVFCKPCICQVIQNEQPHAKCPLCR). Residues 837 to 996 (ALMHALTDLR…TKKPNADEMK (160 aa)) enclose the Helicase C-terminal domain. An interaction with SP1 and SP3 region spans residues 925-1009 (SRVFLMDPAW…INEIRTLIDL (85 aa)).

It belongs to the SNF2/RAD54 helicase family. RAD16 subfamily. Interacts with SP1 and SP3 independently of DNA; the interaction with these transcriptional factors may be required for basal transcription of target genes. Interacts with EGR1; the interaction requires prior binding to DNA and represses c-Rel via a DNA looping mechanism. Interacts with GATA4. Interacts with PCNA; the interaction promotes polyubiquitination of PCNA through association with the UBE2B-RAD18 and UBE2V2-UBE2N ubiquitin ligase complexes. Interacts with RAD18, SHPRH, UBE2V2 and UBE2N. As to expression, expressed in brain, heart, kidney, liver, lung, pancreas, placenta and skeletal muscle.

The protein localises to the cytoplasm. The protein resides in the nucleus. It localises to the nucleolus. It is found in the nucleoplasm. The catalysed reaction is S-ubiquitinyl-[E2 ubiquitin-conjugating enzyme]-L-cysteine + [acceptor protein]-L-lysine = [E2 ubiquitin-conjugating enzyme]-L-cysteine + N(6)-ubiquitinyl-[acceptor protein]-L-lysine.. Its pathway is protein modification; protein ubiquitination. Has both helicase and E3 ubiquitin ligase activities. Possesses intrinsic ATP-dependent nucleosome-remodeling activity; This activity may be required for transcriptional activation or repression of specific target promoters. These may include the SERPINE1 and HIV-1 promoters and the SV40 enhancer, to which this protein can bind directly. Plays a role in error-free postreplication repair (PRR) of damaged DNA and maintains genomic stability through acting as a ubiquitin ligase for 'Lys-63'-linked polyubiquitination of chromatin-bound PCNA. The polypeptide is Helicase-like transcription factor (HLTF) (Homo sapiens (Human)).